The chain runs to 135 residues: MAAATETGQAAVPSRKRRRGRRPPASDPQTLARLAAGPWLPGTLTCPERTGGDAATRSARPPVLPPPPRPPQRRCRHLVSRAGTPRCACAGTASEGPRRGRAAILSVAGSAGSSHPACFRPPPLLPIRPCCSLWR.

The interval 1-75 (MAAATETGQA…PPPRPPQRRC (75 aa)) is disordered.

This is an uncharacterized protein from Homo sapiens (Human).